We begin with the raw amino-acid sequence, 157 residues long: uncharacterized protein (157 aa).

An HD domain is found at 33–134; the sequence is NLKHFLDVAR…MYRADKLSRL (102 aa).

This is an uncharacterized protein from Clostridium beijerinckii (strain ATCC 51743 / NCIMB 8052) (Clostridium acetobutylicum).